The following is a 308-amino-acid chain: Growth/differentiation factor 15 (308 aa).

The signal sequence occupies residues 1–29; the sequence is MPGQELKTLNGSQMLLVLLVLLWPPHGGA. Residues 30–192 constitute a propeptide that is removed on maturation; that stretch reads VSLAEASRAS…HLRPRASRGR (163 aa). N-linked (GlcNAc...) asparagine glycosylation occurs at asparagine 70. A disordered region spans residues 152–179; sequence APALHLRLSPPPSQSDQLLVKSSSSRPQ. Polar residues predominate over residues 165–178; the sequence is QSDQLLVKSSSSRP. 4 cysteine pairs are disulfide-bonded: cysteine 203/cysteine 210, cysteine 211/cysteine 274, cysteine 240/cysteine 305, and cysteine 244/cysteine 307.

It belongs to the TGF-beta family. In terms of assembly, homodimer; disulfide-linked. Interacts with GFRAL and RET; ligand of GFRAL, which mediates GDF15 internalization and cellular signaling through interaction with RET via the formation of a 2:2:2 ternary complex composed of GDF15, GFRAL and RET. In terms of tissue distribution, detected in plasma (at protein level).

The protein localises to the secreted. In terms of biological role, hormone produced in response to various stresses to confer information about those stresses to the brain, and trigger an aversive response, characterized by nausea and/or loss of appetite. The aversive response is both required to reduce continuing exposure to those stresses at the time of exposure and to promote avoidance behavior in the future. Acts by binding to its receptor, GFRAL, activating GFRAL-expressing neurons localized in the area postrema and nucleus tractus solitarius of the brainstem. It then triggers the activation of neurons localized within the parabrachial nucleus and central amygdala, which constitutes part of the 'emergency circuit' that shapes responses to stressful conditions. The GDF15-GFRAL signal induces expression of genes involved in metabolism, such as lipid metabolism in adipose tissues. Required for avoidance behavior in response to food allergens: induced downstream of mast cell activation to promote aversion and minimize harmful effects of exposure to noxious substances. In addition to suppress appetite, also promotes weight loss by enhancing energy expenditure in muscle: acts by increasing calcium futile cycling in muscle. Contributes to the effect of metformin, an anti-diabetic drug, on appetite reduction and weight loss: produced in the kidney in response to metformin treatment, thereby activating the GDF15-GFRAL response, leading to reduced appetite and weight. Produced in response to anticancer drugs, such as camptothecin or cisplatin, promoting nausea and contributing to malnutrition. Overproduced in many cancers, promoting anorexia in cancer (cachexia). Responsible for the risk of nausea during pregnancy: high levels of GDF15 during pregnancy, mostly originating from embryos, are associated with increased nausea. Maternal sensitivity to nausea is probably determined by pre-pregnancy exposure to GDF15, females with naturally high level of GDF15 being less susceptible to nausea than females with low levels of GDF15 before pregnancy. Promotes metabolic adaptation in response to systemic inflammation caused by bacterial and viral infections in order to promote tissue tolerance and prevent tissue damage. Inhibits growth hormone signaling on hepatocytes. This Macaca fascicularis (Crab-eating macaque) protein is Growth/differentiation factor 15.